A 1453-amino-acid polypeptide reads, in one-letter code: Clustered mitochondria protein homolog (1453 aa).

The segment covering 78–101 has biased composition (polar residues); that stretch reads LSENGQENSPHNSDSGHETSSPDS. Positions 78-110 are disordered; that stretch reads LSENGQENSPHNSDSGHETSSPDSPLTPIEEGA. The Clu domain occupies 439–690; sequence EDGIRAEDCT…RTFPPDVNYL (252 aa). Residues 979–1015 are disordered; the sequence is PLTPSNEEVSMPINSVKKSRSSKRRKQISSGGKENDD. The segment covering 995–1005 has biased composition (basic residues); it reads KKSRSSKRRKQ. 2 TPR repeats span residues 1235–1268 and 1277–1310; these read AEIDGNIGVILYAVQEFDDALKFLQNALKLHQIY and ALIYHLLARTYSCRGDFRTALQMEKETFTIYSKT.

The protein belongs to the CLU family.

The protein localises to the cytoplasm. Its function is as follows. mRNA-binding protein involved in proper cytoplasmic distribution of mitochondria. The sequence is that of Clustered mitochondria protein homolog from Brugia malayi (Filarial nematode worm).